A 779-amino-acid polypeptide reads, in one-letter code: Phosphoribosylformylglycinamidine synthase subunit PurL (779 aa).

Residue His-52 is part of the active site. The ATP site is built by Tyr-55 and Lys-94. Glu-96 contacts Mg(2+). Substrate-binding positions include 97-100 and Arg-119; that span reads SHNH. His-98 serves as the catalytic Proton acceptor. Position 120 (Asp-120) interacts with Mg(2+). Gln-243 contacts substrate. Asp-271 is a Mg(2+) binding site. 315 to 317 is a binding site for substrate; that stretch reads ESQ. Residues Asn-523 and Gly-560 each contribute to the ATP site. Asn-561 contributes to the Mg(2+) binding site. Residue Ser-563 participates in substrate binding.

Belongs to the FGAMS family. As to quaternary structure, monomer. Part of the FGAM synthase complex composed of 1 PurL, 1 PurQ and 2 PurS subunits.

The protein localises to the cytoplasm. The catalysed reaction is N(2)-formyl-N(1)-(5-phospho-beta-D-ribosyl)glycinamide + L-glutamine + ATP + H2O = 2-formamido-N(1)-(5-O-phospho-beta-D-ribosyl)acetamidine + L-glutamate + ADP + phosphate + H(+). It functions in the pathway purine metabolism; IMP biosynthesis via de novo pathway; 5-amino-1-(5-phospho-D-ribosyl)imidazole from N(2)-formyl-N(1)-(5-phospho-D-ribosyl)glycinamide: step 1/2. Part of the phosphoribosylformylglycinamidine synthase complex involved in the purines biosynthetic pathway. Catalyzes the ATP-dependent conversion of formylglycinamide ribonucleotide (FGAR) and glutamine to yield formylglycinamidine ribonucleotide (FGAM) and glutamate. The FGAM synthase complex is composed of three subunits. PurQ produces an ammonia molecule by converting glutamine to glutamate. PurL transfers the ammonia molecule to FGAR to form FGAM in an ATP-dependent manner. PurS interacts with PurQ and PurL and is thought to assist in the transfer of the ammonia molecule from PurQ to PurL. The protein is Phosphoribosylformylglycinamidine synthase subunit PurL of Prochlorococcus marinus (strain AS9601).